The chain runs to 513 residues: Bifunctional pantoate ligase/cytidylate kinase (513 aa).

The pantoate--beta-alanine ligase stretch occupies residues 1–282 (MGTFHRLTTT…VGQTRLIDNC (282 aa)). Residue 32–39 (MGALHGGH) participates in ATP binding. H39 acts as the Proton donor in catalysis. Q63 contributes to the (R)-pantoate binding site. Q63 is a beta-alanine binding site. 152–155 (GQKD) is an ATP binding site. Q158 is a binding site for (R)-pantoate. ATP-binding positions include V181 and 189–192 (LSSR). The segment at 283–513 (LLDRRRPILA…HLYRSRFPQP (231 aa)) is cytidylate kinase.

In the N-terminal section; belongs to the pantothenate synthetase family. This sequence in the C-terminal section; belongs to the cytidylate kinase family. Type 1 subfamily.

The protein localises to the cytoplasm. It carries out the reaction (R)-pantoate + beta-alanine + ATP = (R)-pantothenate + AMP + diphosphate + H(+). The catalysed reaction is CMP + ATP = CDP + ADP. It catalyses the reaction dCMP + ATP = dCDP + ADP. Its pathway is cofactor biosynthesis; (R)-pantothenate biosynthesis; (R)-pantothenate from (R)-pantoate and beta-alanine: step 1/1. Functionally, catalyzes the condensation of pantoate with beta-alanine in an ATP-dependent reaction via a pantoyl-adenylate intermediate. In terms of biological role, catalyzes the transfer of a phosphate group from ATP to either CMP or dCMP to form CDP or dCDP and ADP, respectively. This is Bifunctional pantoate ligase/cytidylate kinase from Thermosynechococcus vestitus (strain NIES-2133 / IAM M-273 / BP-1).